The primary structure comprises 498 residues: ATP synthase subunit beta, chloroplastic (498 aa).

Position 172–179 (172–179 (GGAGVGKT)) interacts with ATP.

It belongs to the ATPase alpha/beta chains family. In terms of assembly, F-type ATPases have 2 components, CF(1) - the catalytic core - and CF(0) - the membrane proton channel. CF(1) has five subunits: alpha(3), beta(3), gamma(1), delta(1), epsilon(1). CF(0) has four main subunits: a(1), b(1), b'(1) and c(9-12).

The protein localises to the plastid. It localises to the chloroplast thylakoid membrane. The enzyme catalyses ATP + H2O + 4 H(+)(in) = ADP + phosphate + 5 H(+)(out). Functionally, produces ATP from ADP in the presence of a proton gradient across the membrane. The catalytic sites are hosted primarily by the beta subunits. The polypeptide is ATP synthase subunit beta, chloroplastic (Eucalyptus globulus subsp. globulus (Tasmanian blue gum)).